A 503-amino-acid chain; its full sequence is Diels-Alderase cghA (503 aa).

It belongs to the Diels-Alderase family.

The catalysed reaction is (2S)-3-[(2S)-3,5-dioxo-4-[(2E,4R,6R,8E,10E,12E)-4,6,12-trimethyltetradeca-2,8,10,12-tetraenoyl]pyrrolidin-2-yl]-2-hydroxy-2-methylpropanoate = sch 210972. It participates in secondary metabolite biosynthesis. In terms of biological role, diels-Alderase; part of the gene cluster that mediates the biosynthesis of the tetramic acid Sch210972, a potential anti-HIV fungal natural product that contains a decalin core. The PKS module of cghG together with the enoylreductase cghC catalyze the formation of the polyketide unit which is then conjugated to 4-hydroxyl-4-methyl glutamate (HMG) by the condensation domain of the cghG NRPS module. One unique structural feature of Sch210972 is the tetramic acid motif proposed to be derived from the non-proteinogenic amino acid HMG, by a Dieckmann-type condensation catalyzed by the reductase domain of cghG. The aldolase cghB catalyzes the aldol condensation of 2 molecules of pyruvic acid to yield the intermediate 4-hydroxyl-4-methyl-2-oxoglutarate (HMOG), which can then be stereoselectively transaminated by an unidentified enzyme to form HMG. The Diels-Alderase cghA then uses the Dieckmann product released by cghG as substrate and catalyzes the Diels-Alder cycloaddition to form the decalin ring of Sch210972. CghA also suppresses the nonenzymatic formation of the alternative stereoisomer. This chain is Diels-Alderase cghA, found in Chaetomium globosum (strain ATCC 6205 / CBS 148.51 / DSM 1962 / NBRC 6347 / NRRL 1970) (Soil fungus).